The following is a 539-amino-acid chain: GMP synthase [glutamine-hydrolyzing] (539 aa).

Residues 4–203 enclose the Glutamine amidotransferase type-1 domain; that stretch reads KILILDFGSQ…VHDICGCKSD (200 aa). C82 functions as the Nucleophile in the catalytic mechanism. Active-site residues include H177 and E179. A GMPS ATP-PPase domain is found at 204-395; that stretch reads WNMPDYIAEA…LGLPHDMVYR (192 aa). An ATP-binding site is contributed by 231-237; that stretch reads SGGVDSS.

Homodimer.

It carries out the reaction XMP + L-glutamine + ATP + H2O = GMP + L-glutamate + AMP + diphosphate + 2 H(+). It functions in the pathway purine metabolism; GMP biosynthesis; GMP from XMP (L-Gln route): step 1/1. Its function is as follows. Catalyzes the synthesis of GMP from XMP. This chain is GMP synthase [glutamine-hydrolyzing], found in Herminiimonas arsenicoxydans.